Consider the following 376-residue polypeptide: DNA-directed RNA polymerase subunit alpha (376 aa).

Residues 1 to 259 (MSDNSQNLLY…KHFSIFEKMD (259 aa)) are alpha N-terminal domain (alpha-NTD). An alpha C-terminal domain (alpha-CTD) region spans residues 276–376 (KDDILHKLVL…EKIRSKNVKG (101 aa)).

The protein belongs to the RNA polymerase alpha chain family. Homodimer. The RNAP catalytic core consists of 2 alpha, 1 beta, 1 beta' and 1 omega subunit. When a sigma factor is associated with the core the holoenzyme is formed, which can initiate transcription.

It carries out the reaction RNA(n) + a ribonucleoside 5'-triphosphate = RNA(n+1) + diphosphate. In terms of biological role, DNA-dependent RNA polymerase catalyzes the transcription of DNA into RNA using the four ribonucleoside triphosphates as substrates. In Chlamydia felis (strain Fe/C-56) (Chlamydophila felis), this protein is DNA-directed RNA polymerase subunit alpha.